Here is a 241-residue protein sequence, read N- to C-terminus: Carboxy-S-adenosyl-L-methionine synthase 1 (241 aa).

S-adenosyl-L-methionine contacts are provided by residues Tyr37, 61-63, Asn131, and Arg198; that span reads GCS.

It belongs to the class I-like SAM-binding methyltransferase superfamily. Cx-SAM synthase family. Homodimer.

The catalysed reaction is prephenate + S-adenosyl-L-methionine = carboxy-S-adenosyl-L-methionine + 3-phenylpyruvate + H2O. Catalyzes the conversion of S-adenosyl-L-methionine (SAM) to carboxy-S-adenosyl-L-methionine (Cx-SAM). This Yersinia pseudotuberculosis serotype IB (strain PB1/+) protein is Carboxy-S-adenosyl-L-methionine synthase 1.